Consider the following 423-residue polypeptide: MSYVIDRRLNGKNKSTVNRQRFLRRYREHIKKAVEEAVSRRSITDMEHGEQISIPGRDIDEPVLHHGRGGRQTVVHPGNKEFTAGEHIARPSGGGGGRGGGKASNSGEGMDDFVFQITQEEFLDFMFEDLELPNLVKRHITGTDTFKTIRAGISNDGNPSRINIVRTLRSAHARRIALSGGSRAKLRAALKELERIRREEPDNLGDIQELELEIAKLRARIDRVPFLDTFDLKYNLLVKQPNPTSKAVMFCLMDVSGSMTQATKDIAKRFFILLYLFLKRNYEKIEVVFIRHHTSAREVDEEEFFYSRETGGTIVSSALKMMQEIMAERYPTHEWNIYAAQASDGDNWNDDSPVCRDILLKQIMPFVQYYTYVEITPREHQALWFEYERVREAFEDSFAQQQIVSASDIYPVFRELFQRRLVA.

The tract at residues 84 to 107 (AGEHIARPSGGGGGRGGGKASNSG) is disordered. The segment covering 92-102 (SGGGGGRGGGK) has biased composition (gly residues).

This sequence belongs to the UPF0229 family.

This chain is UPF0229 protein PSPA7_0730, found in Pseudomonas paraeruginosa (strain DSM 24068 / PA7) (Pseudomonas aeruginosa (strain PA7)).